We begin with the raw amino-acid sequence, 297 residues long: Malonyl-[acyl-carrier protein] O-methyltransferase (297 aa).

This sequence belongs to the methyltransferase superfamily.

It catalyses the reaction malonyl-[ACP] + S-adenosyl-L-methionine = malonyl-[ACP] methyl ester + S-adenosyl-L-homocysteine. The protein operates within cofactor biosynthesis; biotin biosynthesis. Functionally, converts the free carboxyl group of a malonyl-thioester to its methyl ester by transfer of a methyl group from S-adenosyl-L-methionine (SAM). It allows to synthesize pimeloyl-ACP via the fatty acid synthetic pathway. The protein is Malonyl-[acyl-carrier protein] O-methyltransferase of Laribacter hongkongensis (strain HLHK9).